Consider the following 62-residue polypeptide: Large ribosomal subunit protein uL30 (62 aa).

It belongs to the universal ribosomal protein uL30 family. In terms of assembly, part of the 50S ribosomal subunit.

This Nitrosospira multiformis (strain ATCC 25196 / NCIMB 11849 / C 71) protein is Large ribosomal subunit protein uL30.